Consider the following 410-residue polypeptide: MAQYDVLIVGAGHGGAQAAVALRQNKFEGTIAIVGDEPELPYERPPLSKEYFSGEKSFDRILIRPATFWAERNVDMLLGKRVASVDPAGHSVTLTDGSTIGYGKLVWATGGAPRKLACSGHHLSGVHGVRTREDADRMLGEMERTTSVVVIGGGYIGLEAAAVLSKAGKKVTVLEALDRVLARVAGEALSRFYEAEHRAHGVDVQLGAKVDCIVGDDQDRVTGVQMHDGSVIPADMVIVGIGIIPAVEPLIAAGAAGGNGVDVDEYCRTSLPDIYAIGDCAMHANAFAEGARIRLESVQNANDQATTAAKHILGGTDAYHAVPWFWSNQYDLRLQTMGLSIGYDETIVRGDPANRSFSVVYLKNGRVLALDCVNAVKDYVQGKALVTGGVSPDKASLANPEIPLKTLLPA.

FAD contacts are provided by glycine 14, aspartate 36, lysine 49, valine 82, arginine 130, aspartate 279, and valine 298.

It belongs to the FAD-dependent oxidoreductase family. The chloroacetanilide N-alkylformylase multicomponent enzyme system is composed of an oxygenase component (CndA) and an electron transfer component formed by a ferredoxin reductase (CndC1) and a ferredoxin (CndB1). In vitro, chloroacetanilide N-alkylformylase assays in which CndB1 is substituted for CndB2 demonstrate that the two enzymes possess nearly identical activities. It depends on FAD as a cofactor.

The enzyme catalyses 2 reduced [2Fe-2S]-[ferredoxin] + NAD(+) + H(+) = 2 oxidized [2Fe-2S]-[ferredoxin] + NADH. Component of the chloroacetanilide N-alkylformylase multicomponent enzyme system involved in the degradation of chloroacetanilide herbicides (N-alkoxyalkyl-N-chloroacetyl-substituted aniline derivatives). In vitro, catalyzes the transfers of electrons from ferredoxin (CndB1) to NADH. N-dealkylase utilizes NADH, but not NADPH, as the electron donor. In Rhizorhabdus wittichii (strain DC-6 / KACC 16600) (Sphingomonas wittichii), this protein is Chloroacetanilide N-alkylformylase, ferredoxin reductase component.